The following is a 776-amino-acid chain: Ecdysone receptor (776 aa).

Positions 1 to 290 are modulating; it reads MYRLNIVSTN…GPTPRQQEEL (290 aa). The disordered stretch occupies residues 199 to 283; that stretch reads NEEWISSPSP…DAKKQKKGPT (85 aa). A compositionally biased stretch (low complexity) spans 204-213; that stretch reads SSPSPGSVPG. 2 stretches are compositionally biased toward polar residues: residues 227-245 and 261-270; these read TTYTTTMSNGYSSPMSTGS and SPSSSLNGYT. The nuclear receptor DNA-binding region spans 288–363; it reads EELCLVCGDR…VGMRPECVVP (76 aa). 2 NR C4-type zinc fingers span residues 291–311 and 327–346; these read CLVCGDRESGYHYNALTCEGC and CKFGHACEMDMYMRRKCQEC. The 237-residue stretch at 437-673 folds into the NR LBD domain; the sequence is NQMAVIYKLI…FLEEIWDVQD (237 aa). A compositionally biased stretch (polar residues) spans 679–688; it reads QAQMHSHGTQ. Residues 679-776 are disordered; it reads QAQMHSHGTQ…VPGLGMLDQV (98 aa). Over residues 689–745 the composition is skewed to low complexity; it reads SSSSSSSSSSSSSNGSSNGNSSSNSNSSQHGPHPHPHGQQLTPNQQQHQQQHSQLQQ.

It belongs to the nuclear hormone receptor family. NR1 subfamily. Heterodimer of USP and ECR. Only the heterodimer is capable of high-affinity binding to ecdysone. In terms of tissue distribution, a peak level expression is seen in the fat body of previtellogenic female mosquitos at one and two days after eclosion, levels fall three-fold at three days posteclosion.

Its subcellular location is the nucleus. Receptor for ecdysone. Binds to ecdysone response elements (ECRES). The chain is Ecdysone receptor (EcR) from Aedes aegypti (Yellowfever mosquito).